The primary structure comprises 251 residues: 3-deoxy-manno-octulosonate cytidylyltransferase (251 aa).

This sequence belongs to the KdsB family.

The protein resides in the cytoplasm. It catalyses the reaction 3-deoxy-alpha-D-manno-oct-2-ulosonate + CTP = CMP-3-deoxy-beta-D-manno-octulosonate + diphosphate. It functions in the pathway nucleotide-sugar biosynthesis; CMP-3-deoxy-D-manno-octulosonate biosynthesis; CMP-3-deoxy-D-manno-octulosonate from 3-deoxy-D-manno-octulosonate and CTP: step 1/1. It participates in bacterial outer membrane biogenesis; lipopolysaccharide biosynthesis. Functionally, activates KDO (a required 8-carbon sugar) for incorporation into bacterial lipopolysaccharide in Gram-negative bacteria. This chain is 3-deoxy-manno-octulosonate cytidylyltransferase, found in Chlorobium luteolum (strain DSM 273 / BCRC 81028 / 2530) (Pelodictyon luteolum).